The chain runs to 310 residues: MIIVTGGAGFIGSNIVKALNDKGITDILVVDNLKDGTKFVNLVDLNIADYMDKEDFLIQIMAGEEFGEIEAIFHEGACSSTTEWDGKYMMDNNYQYSKELLHYCLEREIPFLYASSAATYGGRTSDFIESREYEQPLNVYGYSKFLFDEYVRQILPEANSQIVGFRYFNVYGPREGHKGSMASVAFHLNTQLNNGESPKLFEGSDGFKRDFVYVGDVADVNLWFWENGVSGIFNLGTGRAESFQPVADATLAYHKKGSIEYIPFPDKLKGRYQAFTQADLTNLRKAGYDKPFKTVAEGVTEYMAWLNRDA.

Residues 10-11 (FI), 31-32 (DN), Lys38, Lys53, 75-79 (EGACS), and Asn92 each bind NADP(+). Catalysis depends on Tyr140, which acts as the Proton acceptor. Lys144 provides a ligand contact to NADP(+). A substrate-binding site is contributed by Asn169. Val170 and Lys178 together coordinate NADP(+). Catalysis depends on Lys178, which acts as the Proton acceptor. Substrate-binding positions include Ser180, His187, 201-204 (FEGS), Arg209, and Tyr272.

It belongs to the NAD(P)-dependent epimerase/dehydratase family. HldD subfamily. As to quaternary structure, homopentamer. It depends on NADP(+) as a cofactor.

The catalysed reaction is ADP-D-glycero-beta-D-manno-heptose = ADP-L-glycero-beta-D-manno-heptose. It functions in the pathway nucleotide-sugar biosynthesis; ADP-L-glycero-beta-D-manno-heptose biosynthesis; ADP-L-glycero-beta-D-manno-heptose from D-glycero-beta-D-manno-heptose 7-phosphate: step 4/4. Its pathway is bacterial outer membrane biogenesis; LPS core biosynthesis. Functionally, catalyzes the interconversion between ADP-D-glycero-beta-D-manno-heptose and ADP-L-glycero-beta-D-manno-heptose via an epimerization at carbon 6 of the heptose. This Klebsiella pneumoniae protein is ADP-L-glycero-D-manno-heptose-6-epimerase.